Reading from the N-terminus, the 440-residue chain is IAA-amino acid hydrolase ILR1-like 4 (440 aa).

Residues 1–23 form the signal peptide; that stretch reads MSFFKWVSFVLILHLLNPTLISC. Positions 134, 136, 170, 194, and 397 each coordinate Mn(2+). Residues 437–440 carry the Prevents secretion from ER motif; that stretch reads KDEL.

This sequence belongs to the peptidase M20 family. It depends on Mn(2+) as a cofactor. In terms of tissue distribution, expressed in leaves, stems, roots, siliques and flowers. Detected in the vascular tissue of cotyledons and roots, in adult leaves, stems, siliques, petals, hydathodes and in silique abscission zones and funicles.

It localises to the endoplasmic reticulum lumen. It catalyses the reaction a jasmonyl-L-amino acid + H2O = a jasmonate + an L-alpha-amino acid. Hydrolyzes certain amino acid conjugates of the plant growth regulator indole-3-acetic acid (IAA), including IAA-Ala, IAA-Asn, IAA-Cys, IAA-Glu, IAA-Met, IAA-Ser and IAA-Gly. Has a lower efficiency with IAA-Phe, IAA-Leu and IAA-Val and no activity with IAA-Ile. Important for IAA-Leu hydrolysis in roots. Also hydrolyzes amino acid conjugates of jasmonic acid and 12-hydroxy jasmonic acid. The polypeptide is IAA-amino acid hydrolase ILR1-like 4 (Arabidopsis thaliana (Mouse-ear cress)).